The sequence spans 1479 residues: ESX secretion system protein EccC (1479 aa).

The Cytoplasmic segment spans residues 1 to 235 (MSQLWVLYET…SQEGDGDPRG (235 aa)). Residues 236–256 (LWLMVLPPVMMLLVIGAVALI) traverse the membrane as a helical segment. The Extracellular portion of the chain corresponds to 257–259 (QPR). A helical membrane pass occupies residues 260 to 280 (GVFIMISIAMFATTIVTSTAQ). The Cytoplasmic portion of the chain corresponds to 281–1479 (YMREKKARQM…DQKIQIPKVE (1199 aa)). The stretch at 291 to 321 (RKEKRRRIYTNYLEQKREELQALSEKQRNVL) forms a coiled coil. 2 consecutive FtsK domains span residues 652–848 (NDVV…NDSK) and 984–1168 (QSDY…SEKF). 672 to 679 (GTTGSGKS) serves as a coordination point for ATP. Residue E785 is part of the active site. Residues 1004–1009 (GYGKST), N1036, D1105, I1197, D1206, 1287–1291 (RKGKT), and I1475 contribute to the ATP site. One can recognise a FtsK 3 domain in the interval 1267–1444 (VRPVAINMRT…ILVTKKSEQS (178 aa)).

Whole protein oligomerizes in native gels. Part of the ESX / type VII secretion system (T7SS), which is composed of cytosolic and membrane components. The ESX membrane complex is composed of EccB, EccC and EccD.

The protein localises to the cell membrane. Its activity is regulated as follows. EsxB binding to the third FtsK domain causes multimerization; a subsequent unknown step relieves the allosteric inhibition of linker 2 on FtsK domain 1, activating the ATPase activity. In terms of biological role, part of the ESX specialized secretion system, which exports proteins from the cell including EsxA (ESAT-6) and EsxB (CFP-10). Might be the translocase subunit. Probably only the first FtsK domain can hydrolyze ATP. This is ESX secretion system protein EccC from Geobacillus thermodenitrificans (strain NG80-2).